Reading from the N-terminus, the 1150-residue chain is Cohesin subunit SCC3 (1150 aa).

Residues 1–12 are compositionally biased toward basic residues; it reads MTAVRRSTRIRT. Positions 1–122 are disordered; sequence MTAVRRSTRI…PAYHRSKKDQ (122 aa). S28 bears the Phosphoserine mark. Over residues 32-43 the composition is skewed to basic and acidic residues; the sequence is VESDKITAKTQH. Residues 44-72 are compositionally biased toward acidic residues; that stretch reads EEEEEQDTGESEESSSEDDYEDQDDDDYV. Residues 77–87 are compositionally biased toward basic residues; sequence AKRKSRKRKPK. A coiled-coil region spans residues 305–349; sequence LTQQAVNLEKNYLAKLSKQLSLEEKKKRPNNKTLEKLESTIAETQ. Residues 367–457 enclose the SCD domain; the sequence is FVHRYKDVSD…ERFKTKILEV (91 aa). At S628 the chain carries Phosphoserine. The tract at residues 1065-1150 is disordered; sequence ENPEPNKKNI…IDNSDEITQD (86 aa). The segment covering 1083-1101 has biased composition (basic and acidic residues); that stretch reads QREKAPLQPNSERETDHAN.

Belongs to the SCC3 family. As to quaternary structure, interacts directly with MCD1 in cohesin complex. Cohesin complexes are composed of the SMC1 and SMC3 heterodimer attached via their hinge domain, MCD1 which link them, and IRR1/SCC3, which interacts with MCD1. The cohesin complex also interacts with SCC2, which is required for its association with chromosomes. Interacts with LIN1. In terms of processing, acetylated by ECO1.

The protein resides in the nucleus. The protein localises to the chromosome. It is found in the centromere. Component of cohesin complex, a complex required for the cohesion of sister chromatids after DNA replication. The cohesin complex apparently forms a large proteinaceous ring within which sister chromatids can be trapped. At anaphase, the MCD1/SCC1 subunit of the complex is cleaved and dissociates from chromatin, allowing sister chromatids to segregate. The cohesin complex may also play a role in spindle pole assembly during mitosis. The sequence is that of Cohesin subunit SCC3 (IRR1) from Saccharomyces cerevisiae (strain ATCC 204508 / S288c) (Baker's yeast).